The chain runs to 597 residues: Probable potassium transport system protein Kup 1 (597 aa).

Helical transmembrane passes span 23-43, 72-92, 98-118, 143-163, 174-194, 226-246, 273-293, 303-323, 329-349, and 353-373; these read GAWL…DSVL, LTMM…SRGT, VFGS…VVAI, ATGL…EALY, IYFT…GQGA, AVVL…TGAF, LYIP…LLLF, YGLA…IYLW, FGAV…FAAS, and FLHG…IMYT.

It belongs to the HAK/KUP transporter (TC 2.A.72) family.

The protein resides in the cell membrane. The enzyme catalyses K(+)(in) + H(+)(in) = K(+)(out) + H(+)(out). Its function is as follows. Transport of potassium into the cell. Likely operates as a K(+):H(+) symporter. The chain is Probable potassium transport system protein Kup 1 (kup1) from Bifidobacterium longum (strain NCC 2705).